An 89-amino-acid chain; its full sequence is Small ribosomal subunit protein uS15 (89 aa).

The protein belongs to the universal ribosomal protein uS15 family. Part of the 30S ribosomal subunit. Forms a bridge to the 50S subunit in the 70S ribosome, contacting the 23S rRNA.

Functionally, one of the primary rRNA binding proteins, it binds directly to 16S rRNA where it helps nucleate assembly of the platform of the 30S subunit by binding and bridging several RNA helices of the 16S rRNA. In terms of biological role, forms an intersubunit bridge (bridge B4) with the 23S rRNA of the 50S subunit in the ribosome. This is Small ribosomal subunit protein uS15 from Thermosynechococcus vestitus (strain NIES-2133 / IAM M-273 / BP-1).